A 359-amino-acid polypeptide reads, in one-letter code: Peptide chain release factor 1 (359 aa).

N5-methylglutamine is present on Gln235. A disordered region spans residues 285–305; that stretch reads KRDSEISQMRKSQIGSGDRSE. The span at 290 to 299 shows a compositional bias: polar residues; the sequence is ISQMRKSQIG.

This sequence belongs to the prokaryotic/mitochondrial release factor family. Post-translationally, methylated by PrmC. Methylation increases the termination efficiency of RF1.

Its subcellular location is the cytoplasm. Functionally, peptide chain release factor 1 directs the termination of translation in response to the peptide chain termination codons UAG and UAA. The sequence is that of Peptide chain release factor 1 from Ehrlichia canis (strain Jake).